We begin with the raw amino-acid sequence, 233 residues long: Putative N-acetylmannosamine-6-phosphate 2-epimerase (233 aa).

Belongs to the NanE family.

The catalysed reaction is an N-acyl-D-glucosamine 6-phosphate = an N-acyl-D-mannosamine 6-phosphate. Its pathway is amino-sugar metabolism; N-acetylneuraminate degradation; D-fructose 6-phosphate from N-acetylneuraminate: step 3/5. Its function is as follows. Converts N-acetylmannosamine-6-phosphate (ManNAc-6-P) to N-acetylglucosamine-6-phosphate (GlcNAc-6-P). The polypeptide is Putative N-acetylmannosamine-6-phosphate 2-epimerase (Yersinia pseudotuberculosis serotype O:1b (strain IP 31758)).